The primary structure comprises 205 residues: Urease accessory protein UreE (205 aa).

The segment covering 171–192 (HHGHSHSHDHDHDHDHDHDHQH) has biased composition (basic and acidic residues). Positions 171-205 (HHGHSHSHDHDHDHDHDHDHQHGPCCSHGHHHGHR) are disordered.

It belongs to the UreE family.

It is found in the cytoplasm. Involved in urease metallocenter assembly. Binds nickel. Probably functions as a nickel donor during metallocenter assembly. The protein is Urease accessory protein UreE of Burkholderia pseudomallei (strain K96243).